The sequence spans 692 residues: Proprotein convertase subtilisin/kexin type 9 (692 aa).

The signal sequence occupies residues 1-30 (MGTVSSRRSWWPLPLPLLLLLLLGPAGARA). Residues 31-152 (QEDEDGDYEE…IEEDSSVFAQ (122 aa)) constitute a propeptide that is removed on maturation. Position 38 is a sulfotyrosine (Y38). At S47 the chain carries Phosphoserine. Positions 77 to 149 (TYVVVLKEET…VDYIEEDSSV (73 aa)) constitute an Inhibitor I9 domain. Residues 155 to 444 (PWNLERITPA…VLTPNLVAAL (290 aa)) form the Peptidase S8 domain. Catalysis depends on charge relay system residues D186 and H226. Cystine bridges form between C223–C255 and C323–C358. The active-site Charge relay system is S386. Residues 450–692 (RAGWQLFCRT…HLVQASQELQ (243 aa)) are C-terminal domain. 3 disulfide bridges follow: C457–C527, C477–C526, and C486–C509. N-linked (GlcNAc...) asparagine glycosylation occurs at N533. Intrachain disulfides connect C534-C601, C552-C600, C562-C588, C608-C679, C626-C678, and C635-C654. The residue at position 688 (S688) is a Phosphoserine.

Belongs to the peptidase S8 family. As to quaternary structure, monomer. Can self-associate to form dimers and higher multimers which may have increased LDLR degrading activity. The precursor protein but not the mature protein may form multimers. Interacts with APOB, VLDLR, LRP8/APOER2 and BACE1. The full-length immature form (pro-PCSK9) interacts with SCNN1A, SCNN1B and SCNN1G. The pro-PCSK9 form (via C-terminal domain) interacts with LDLR. Interacts (via the C-terminal domain) with ANXA2 (via repeat Annexin 1); the interaction inhibits the degradation of LDLR. The cofactor is Ca(2+). Post-translationally, cleavage by furin and PCSK5 generates a truncated inactive protein that is unable to induce LDLR degradation. Undergoes autocatalytic cleavage in the endoplasmic reticulum to release the propeptide from the N-terminus and the cleavage of the propeptide is strictly required for its maturation and activation. The cleaved propeptide however remains associated with the catalytic domain through non-covalent interactions, preventing potential substrates from accessing its active site. As a result, it is secreted from cells as a propeptide-containing, enzymatically inactive protein. In terms of processing, phosphorylation protects the propeptide against proteolysis.

It is found in the cytoplasm. The protein resides in the secreted. Its subcellular location is the endosome. It localises to the lysosome. The protein localises to the cell surface. It is found in the endoplasmic reticulum. The protein resides in the golgi apparatus. Its activity is regulated as follows. Its proteolytic activity is autoinhibited by the non-covalent binding of the propeptide to the catalytic domain. Inhibited by EGTA. Its function is as follows. Crucial player in the regulation of plasma cholesterol homeostasis. Binds to low-density lipid receptor family members: low density lipoprotein receptor (LDLR), very low density lipoprotein receptor (VLDLR), apolipoprotein E receptor (LRP1/APOER) and apolipoprotein receptor 2 (LRP8/APOER2), and promotes their degradation in intracellular acidic compartments. Acts via a non-proteolytic mechanism to enhance the degradation of the hepatic LDLR through a clathrin LDLRAP1/ARH-mediated pathway. May prevent the recycling of LDLR from endosomes to the cell surface or direct it to lysosomes for degradation. Can induce ubiquitination of LDLR leading to its subsequent degradation. Inhibits intracellular degradation of APOB via the autophagosome/lysosome pathway in a LDLR-independent manner. Involved in the disposal of non-acetylated intermediates of BACE1 in the early secretory pathway. Inhibits epithelial Na(+) channel (ENaC)-mediated Na(+) absorption by reducing ENaC surface expression primarily by increasing its proteasomal degradation. Regulates neuronal apoptosis via modulation of LRP8/APOER2 levels and related anti-apoptotic signaling pathways. The polypeptide is Proprotein convertase subtilisin/kexin type 9 (PCSK9) (Macaca nemestrina (Pig-tailed macaque)).